Consider the following 200-residue polypeptide: MPQKKHNRVRSAKVLRKTSETDISVEVDLDGSGSSTVDSGVTFLDHMLTNFSKHSGIDIALRCKGDTGIDDHHSVEDIAIVMGSAILEALGDKKGIHRYGWAIIPMDEALARCSLDLGGRSYCVFHAPFSRAEINGFSTEMVEHFFVSLSRTLQANLHLRVLEGSNTHHKIEALFKAFAYAMKQAVHIIGTDIPSTKGMI.

It belongs to the imidazoleglycerol-phosphate dehydratase family.

It localises to the cytoplasm. The catalysed reaction is D-erythro-1-(imidazol-4-yl)glycerol 3-phosphate = 3-(imidazol-4-yl)-2-oxopropyl phosphate + H2O. It functions in the pathway amino-acid biosynthesis; L-histidine biosynthesis; L-histidine from 5-phospho-alpha-D-ribose 1-diphosphate: step 6/9. This is Imidazoleglycerol-phosphate dehydratase from Chlorobium phaeobacteroides (strain BS1).